The chain runs to 32 residues: Delta-conotoxin EVIA (32 aa).

Disulfide bonds link C3/C21, C10/C25, and C20/C29. 4-hydroxyproline is present on P6. L32 carries the post-translational modification Leucine amide.

Belongs to the conotoxin O1 superfamily. Expressed by the venom duct.

Its subcellular location is the secreted. Delta-conotoxins bind to site 6 of voltage-gated sodium channels and inhibit the inactivation process. This toxin inhibits sodium channel inactivation in neuronal membranes from amphibians and mammals (Nav1.2a/SCN1A, Nav1.3/SCN3A and Nav1.6/SCN8A) upon binding to receptor site 6. The sequence is that of Delta-conotoxin EVIA from Conus ermineus (Agate cone).